We begin with the raw amino-acid sequence, 398 residues long: Dual-specificity RNA methyltransferase RlmN (398 aa).

The Proton acceptor role is filled by Glu119. Residues 125 to 364 (DGDRATLCVS…TIVRKTRGDD (240 aa)) enclose the Radical SAM core domain. A disulfide bond links Cys132 and Cys369. 3 residues coordinate [4Fe-4S] cluster: Cys139, Cys143, and Cys146. Residues 193 to 194 (GE), Ser225, 247 to 249 (SLH), and Asn326 contribute to the S-adenosyl-L-methionine site. Cys369 functions as the S-methylcysteine intermediate in the catalytic mechanism.

Belongs to the radical SAM superfamily. RlmN family. The cofactor is [4Fe-4S] cluster.

The protein resides in the cytoplasm. It carries out the reaction adenosine(2503) in 23S rRNA + 2 reduced [2Fe-2S]-[ferredoxin] + 2 S-adenosyl-L-methionine = 2-methyladenosine(2503) in 23S rRNA + 5'-deoxyadenosine + L-methionine + 2 oxidized [2Fe-2S]-[ferredoxin] + S-adenosyl-L-homocysteine. The catalysed reaction is adenosine(37) in tRNA + 2 reduced [2Fe-2S]-[ferredoxin] + 2 S-adenosyl-L-methionine = 2-methyladenosine(37) in tRNA + 5'-deoxyadenosine + L-methionine + 2 oxidized [2Fe-2S]-[ferredoxin] + S-adenosyl-L-homocysteine. Its function is as follows. Specifically methylates position 2 of adenine 2503 in 23S rRNA and position 2 of adenine 37 in tRNAs. m2A2503 modification seems to play a crucial role in the proofreading step occurring at the peptidyl transferase center and thus would serve to optimize ribosomal fidelity. This Serratia proteamaculans (strain 568) protein is Dual-specificity RNA methyltransferase RlmN.